We begin with the raw amino-acid sequence, 175 residues long: Large ribosomal subunit protein uL10 (175 aa).

The protein belongs to the universal ribosomal protein uL10 family. As to quaternary structure, part of the ribosomal stalk of the 50S ribosomal subunit. The N-terminus interacts with L11 and the large rRNA to form the base of the stalk. The C-terminus forms an elongated spine to which L12 dimers bind in a sequential fashion forming a multimeric L10(L12)X complex.

Functionally, forms part of the ribosomal stalk, playing a central role in the interaction of the ribosome with GTP-bound translation factors. This chain is Large ribosomal subunit protein uL10, found in Synechococcus sp. (strain CC9605).